The following is a 277-amino-acid chain: S-formylglutathione hydrolase FrmB (277 aa).

Catalysis depends on charge relay system residues serine 145, aspartate 221, and histidine 254.

The protein belongs to the esterase D family.

It catalyses the reaction S-formylglutathione + H2O = formate + glutathione + H(+). In terms of biological role, serine hydrolase involved in the detoxification of formaldehyde. Hydrolyzes S-formylglutathione to glutathione and formate. This Escherichia coli (strain K12 / DH10B) protein is S-formylglutathione hydrolase FrmB (frmB).